Here is a 506-residue protein sequence, read N- to C-terminus: Ribose import ATP-binding protein RbsA (506 aa).

ABC transporter domains are found at residues 5–241 and 254–498; these read LALT…VGRR and RDAA…TSDV. Residue 37 to 44 participates in ATP binding; the sequence is GENGAGKS.

Belongs to the ABC transporter superfamily. Ribose importer (TC 3.A.1.2.1) family. In terms of assembly, the complex is composed of an ATP-binding protein (RbsA), two transmembrane proteins (RbsC) and a solute-binding protein (RbsB).

The protein localises to the cell inner membrane. The catalysed reaction is D-ribose(out) + ATP + H2O = D-ribose(in) + ADP + phosphate + H(+). Functionally, part of the ABC transporter complex RbsABC involved in ribose import. Responsible for energy coupling to the transport system. The chain is Ribose import ATP-binding protein RbsA from Burkholderia mallei (strain ATCC 23344).